Consider the following 287-residue polypeptide: Phosphoribosylaminoimidazole-succinocarboxamide synthase (287 aa).

The protein belongs to the SAICAR synthetase family.

It carries out the reaction 5-amino-1-(5-phospho-D-ribosyl)imidazole-4-carboxylate + L-aspartate + ATP = (2S)-2-[5-amino-1-(5-phospho-beta-D-ribosyl)imidazole-4-carboxamido]succinate + ADP + phosphate + 2 H(+). Its pathway is purine metabolism; IMP biosynthesis via de novo pathway; 5-amino-1-(5-phospho-D-ribosyl)imidazole-4-carboxamide from 5-amino-1-(5-phospho-D-ribosyl)imidazole-4-carboxylate: step 1/2. This chain is Phosphoribosylaminoimidazole-succinocarboxamide synthase, found in Neisseria meningitidis serogroup B (strain ATCC BAA-335 / MC58).